The following is a 256-amino-acid chain: Probable elongation factor 1-delta (256 aa).

A phosphoserine mark is found at S37, S53, and S89. The tract at residues 110–146 (NGVSKEPEVEAKKPEANDDDDDVDLFGSDSEEEDGEA) is disordered. The segment covering 114 to 125 (KEPEVEAKKPEA) has biased composition (basic and acidic residues). Residues 126–144 (NDDDDDVDLFGSDSEEEDG) are compositionally biased toward acidic residues. S137 and S139 each carry phosphoserine.

This sequence belongs to the EF-1-beta/EF-1-delta family. As to quaternary structure, EF-1 is composed of 4 subunits: alpha, beta, delta, and gamma.

Functionally, EF-1-beta and EF-1-delta stimulate the exchange of GDP bound to EF-1-alpha to GTP. This chain is Probable elongation factor 1-delta (eEF1delta), found in Drosophila melanogaster (Fruit fly).